A 234-amino-acid polypeptide reads, in one-letter code: Protein UL20 homolog (234 aa).

Transmembrane regions (helical) follow at residues 82–102, 112–132, 153–173, and 191–211; these read VVLF…IFLF, FLIL…LEMY, IGAL…NMIF, and TSGF…ITSI.

This sequence belongs to the alphaherpesvirinae UL20 family. As to quaternary structure, interacts with gK (via N-terminus); this interaction plays a role in the coordinate transport of UL20 and gK to the trans-Golgi network (TGN), and is required for their cell surface expression. Interacts with gB.

Its subcellular location is the virion. The protein localises to the host cell membrane. The protein resides in the host endosome membrane. It is found in the host Golgi apparatus membrane. It localises to the host nucleus membrane. Its function is as follows. Plays an essential role in egress of virus particles from the nucleus, cytoplasmic envelopment and virus-induced cell fusion. Forms a functional protein complex with gK and this interaction is absolutely essential for their coordinate intracellular transport, gK glycosylation, expression on host cell surface, and function. Together, they modulate gB-mediated virus-induced cell fusion and virion egress and therefore actively participate in these processes. The chain is Protein UL20 homolog (MDV032) from Gallid herpesvirus 2 (strain Chicken/Md5/ATCC VR-987) (GaHV-2).